The chain runs to 159 residues: Riboflavin kinase (159 aa).

38 to 43 lines the CDP pocket; that stretch reads GLGEGR. 2 residues coordinate Mg(2+): threonine 67 and asparagine 69. FMN-binding residues include threonine 126 and glutamate 134. Position 139 to 142 (139 to 142) interacts with CDP; sequence HKLR.

It belongs to the archaeal riboflavin kinase family. It depends on Mg(2+) as a cofactor.

The enzyme catalyses riboflavin + CTP = CDP + FMN + H(+). It participates in cofactor biosynthesis; FMN biosynthesis; FMN from riboflavin (CTP route): step 1/1. In terms of biological role, catalyzes the CTP-dependent phosphorylation of riboflavin (vitamin B2) to form flavin mononucleotide (FMN). This is Riboflavin kinase from Sulfolobus acidocaldarius (strain ATCC 33909 / DSM 639 / JCM 8929 / NBRC 15157 / NCIMB 11770).